A 440-amino-acid polypeptide reads, in one-letter code: MSYFEHIPAIRYEGPQSDNPLAYHHYDPDKRVLGKTLAEHLRIAVCYWHTFVWPGHDIFGQGAFQRPWQQPGDALERARQKADAAFEFFTKLGTPFYTFHDTDVAPEGDSLRDYAANFARMVDYLGERQHASGVRLLWGTANLFSHPRFAAGAATNPNPDVFAWAATQVCHALDATHRLGGENYVLWGGREGYETLLNTDLKRERDQFARFLSMVVEHKHRIGFKGALLIEPKPQEPTKHQYDYDVATVHGFLVQYGLQNEIRVNIEANHATLAGHSFHHEIANAFALGVFGSVDANRGDPQNGWDTDQFPNSVEELTLAFYEILRHGGFTTGGMNFDAKVRRQSIDPEDLFYGHVGAIDVLALALERAAVLVENDRLDALRRQRYAQWDDAFGRKILSGGYTLESLAADALARGVNPRHASGAQERLENIVNQAIYGLR.

Active-site residues include histidine 100 and aspartate 103. Positions 231, 267, 270, 295, 306, 308, and 338 each coordinate Mg(2+).

It belongs to the xylose isomerase family. As to quaternary structure, homotetramer. Requires Mg(2+) as cofactor.

It is found in the cytoplasm. The catalysed reaction is alpha-D-xylose = alpha-D-xylulofuranose. This is Xylose isomerase from Burkholderia orbicola (strain MC0-3).